A 379-amino-acid polypeptide reads, in one-letter code: F-box protein At1g30200 (379 aa).

The F-box domain occupies 24 to 72 (DHFDLLPDSLLLLIFDKVADVKDLGRCCIVSRRFHSLVPFVENVLVRVD).

This chain is F-box protein At1g30200, found in Arabidopsis thaliana (Mouse-ear cress).